A 306-amino-acid polypeptide reads, in one-letter code: MELVFLGTGAGVPSRGRNVTSIALSMLNERNAIWLFDCGEATQHQIMRSQIKLSKLEKIFITHLHGDHIFGLPGLLSSRSFQGGESDLTIYGPVGITEYVETSLRLSGTRLTYKIIFNEIEPGLIFEDKMFSITVDELDHGLRSFGYRIVEKDKPGALNADKLIEDGVEPGPIFQKIKKGETVTLADGSVINGKDYIDEPQKGKIISIFGDTKATASELELALNADVLVHEATFEGDKEKLAGEYMHSTTLQAASLAKKANVKKLILTHISSRYDRDASKELLIEAQSVFENTEIAYDLAVFPIGE.

Zn(2+) is bound by residues His63, His65, Asp67, His68, His140, Asp211, and His269. Catalysis depends on Asp67, which acts as the Proton acceptor.

Belongs to the RNase Z family. In terms of assembly, homodimer. Requires Zn(2+) as cofactor.

It carries out the reaction Endonucleolytic cleavage of RNA, removing extra 3' nucleotides from tRNA precursor, generating 3' termini of tRNAs. A 3'-hydroxy group is left at the tRNA terminus and a 5'-phosphoryl group is left at the trailer molecule.. Zinc phosphodiesterase, which displays some tRNA 3'-processing endonuclease activity. Probably involved in tRNA maturation, by removing a 3'-trailer from precursor tRNA. The sequence is that of Ribonuclease Z from Listeria monocytogenes serotype 4a (strain HCC23).